The following is a 418-amino-acid chain: Magnesium-chelatase subunit ChlI-2, chloroplastic (418 aa).

The N-terminal 55 residues, 1–55 (MASLLGRSPSSILTCPRISSPSSTSSMSHLCFGPEKLSGRIQFNPKKNRSRYHVS), are a transit peptide targeting the chloroplast. N-acetylvaline is present on Val56. 2 disulfide bridges follow: Cys96-Cys187 and Cys348-Cys390. 113–120 (GDRGTGKS) serves as a coordination point for ATP.

Belongs to the Mg-chelatase subunits D/I family. The magnesium chelatase complex is a heterotrimer consisting of subunits CHLI, CHLD and CHLH. In terms of tissue distribution, expressed in leaves.

The protein localises to the plastid. It localises to the chloroplast. The enzyme catalyses protoporphyrin IX + Mg(2+) + ATP + H2O = Mg-protoporphyrin IX + ADP + phosphate + 3 H(+). Its pathway is porphyrin-containing compound metabolism; chlorophyll biosynthesis. Redox regulation; active in reducing conditions, inactive in oxidizing conditions. Thioredoxins f and m mediate the reversible reductive activation of oxidized CHLI2. Involved in chlorophyll biosynthesis. Catalyzes the insertion of magnesium ion into protoporphyrin IX to yield Mg-protoporphyrin IX. The reaction takes place in two steps, with an ATP-dependent activation followed by an ATP-dependent chelation step. Possesses low affinity for ATP and may play a limited role in chlorophyll biosynthesis, and contributes to the assembly of the Mg-chelatase complex. The sequence is that of Magnesium-chelatase subunit ChlI-2, chloroplastic (CHLI2) from Arabidopsis thaliana (Mouse-ear cress).